Consider the following 251-residue polypeptide: Probable ATP-dependent transporter ycf16 (251 aa).

Residues 7 to 251 form the ABC transporter domain; sequence LNIKNLDVTI…EKYGYDYLNK (245 aa). 39–46 is an ATP binding site; it reads GKNGSGKS.

This sequence belongs to the ABC transporter superfamily. Ycf16 family.

It localises to the plastid. It is found in the chloroplast. The chain is Probable ATP-dependent transporter ycf16 (ycf16) from Antithamnion sp. (Red alga).